Reading from the N-terminus, the 206-residue chain is Probable N-acetyltransferase 14 (206 aa).

The region spanning 55–206 (LRFVLASFAL…TLVREFSKEL (152 aa)) is the N-acetyltransferase domain. Residues 57–77 (FVLASFALALLLPVFLAVAAM) form a helical membrane-spanning segment.

Belongs to the camello family.

It is found in the membrane. Functionally, probable acetyltransferase. In terms of biological role, may act as a transcription factor regulating the expression of coproporphyrinogen oxidase by binding to a promoter regulatory element. This chain is Probable N-acetyltransferase 14, found in Bos taurus (Bovine).